A 475-amino-acid polypeptide reads, in one-letter code: UDP-N-acetylmuramate--L-alanine ligase (475 aa).

ATP is bound at residue Gly-114 to Thr-120.

It belongs to the MurCDEF family.

It is found in the cytoplasm. The catalysed reaction is UDP-N-acetyl-alpha-D-muramate + L-alanine + ATP = UDP-N-acetyl-alpha-D-muramoyl-L-alanine + ADP + phosphate + H(+). Its pathway is cell wall biogenesis; peptidoglycan biosynthesis. Functionally, cell wall formation. The chain is UDP-N-acetylmuramate--L-alanine ligase from Bartonella bacilliformis (strain ATCC 35685 / KC583 / Herrer 020/F12,63).